Consider the following 550-residue polypeptide: Sterol O-acyltransferase 1 (550 aa).

Met1 is modified (N-acetylmethionine). The segment at 1 to 36 (MVGEEKMSLRNRLSKSRENPEEDEDQRKPAKESLEA) is disordered. Residues 1 to 138 (MVGEEKMSLR…LDELLEVDHI (138 aa)) lie on the Cytoplasmic side of the membrane. Ser8 carries the phosphoserine modification. Residues 15–34 (KSRENPEEDEDQRKPAKESL) are compositionally biased toward basic and acidic residues. His137 is a binding site for cholesterol. The chain crosses the membrane as a helical span at residues 139–160 (RTIYHMFIALLILFILSTLVVD). Residues 161–180 (YIDEGRLVLEFSLLSYAFGK) lie on the Lumenal side of the membrane. Residues 181–206 (FPTVVWTWWIMFLSTFSVPYFLFQRW) form a helical membrane-spanning segment. Residues 207–218 (ATGYSKSSHPLI) lie on the Cytoplasmic side of the membrane. Residues 219–244 (NSLFHGFLFMVFQIGILGFGPTYVVL) form a helical membrane-spanning segment. The Lumenal segment spans residues 245 to 252 (AYTLPPAS). Residues 253 to 276 (RFIIIFEQIRFVMKAHSFVRENVP) traverse the membrane as a helical segment. Topologically, residues 277 to 319 (RVLNSAKEKSSTVPIPTVNQYLYFLFAPTLIYRDSYPRNPTVR) are cytoplasmic. Residues 320-352 (WGYVAMQFAQVFGCFFYVYYIFERLCAPLFRNI) traverse the membrane as a helical segment. The Lumenal portion of the chain corresponds to 353-369 (KQEPFSARVLVLCVFNS). The chain crosses the membrane as a helical span at residues 370–395 (ILPGVLILFLTFFAFLHCWLNAFAEM). At 396-443 (LRFGDRMFYKDWWNSTSYSNYYRTWNVVVHDWLYYYAYKDFLWFFSKR) the chain is on the cytoplasmic side. The short motif at 403 to 409 (FYKDWWN) is the FYXDWWN motif element. An acyl-CoA is bound by residues Asn415, Arg418, Asn421, His425, Tyr433, Lys445, and Ser456. Residues 444–468 (FKSAAMLAVFAVSAVVHEYALAVCL) form a helical membrane-spanning segment. His460 is a catalytic residue. Over 469 to 474 (SFFYPV) the chain is Lumenal. Residues 475-490 (LFVLFMFFGMAFNFIV) form a helical membrane-spanning segment. Residues 491–496 (NDSRKK) are Cytoplasmic-facing. A helical transmembrane segment spans residues 497 to 528 (PIWNVMMWTSLFLGNGVLLCFYSQEWYARQHC). Cys528 and Cys546 are joined by a disulfide. Topologically, residues 529-550 (PLKNPTFLDYVRPRSWTCRYVF) are lumenal.

Belongs to the membrane-bound acyltransferase family. Sterol o-acyltransferase subfamily. As to quaternary structure, may form homo- or heterodimers. Interacts with UBIAD1. Expressed in most tissues, but most strongly in the adrenal gland. Expressed more strongly in liver Kupffer cells than in hepatocytes.

It is found in the endoplasmic reticulum membrane. It carries out the reaction a sterol + a long-chain fatty acyl-CoA = a long-chain 3-hydroxysterol ester + CoA. It catalyses the reaction cholesterol + an acyl-CoA = a cholesterol ester + CoA. The catalysed reaction is cholesterol + (9Z)-octadecenoyl-CoA = cholesteryl (9Z-octadecenoate) + CoA. The enzyme catalyses cholesterol + hexadecanoyl-CoA = cholesteryl hexadecanoate + CoA. It carries out the reaction octadecanoyl-CoA + cholesterol = cholesteryl octadecanoate + CoA. It catalyses the reaction (9Z,12Z)-octadecadienoyl-CoA + cholesterol = cholesteryl (9Z,12Z)-octadecadienoate + CoA. The catalysed reaction is (5Z,8Z,11Z,14Z)-eicosatetraenoyl-CoA + cholesterol = cholesteryl (5Z,8Z,11Z,14Z)-eicosatetraenoate + CoA. The enzyme catalyses (9Z)-hexadecenoyl-CoA + cholesterol = cholesteryl (9Z)-hexadecenoate + CoA. It carries out the reaction (11Z)-octadecenoyl-CoA + cholesterol = cholesteryl (11Z)-octadecenoate + CoA. It catalyses the reaction (7Z)-octadecenoyl-CoA + cholesterol = cholesteryl (7Z)-octadecenoate + CoA. Functionally, catalyzes the formation of fatty acid-cholesterol esters, which are less soluble in membranes than cholesterol. Plays a role in lipoprotein assembly and dietary cholesterol absorption. Preferentially utilizes oleoyl-CoA ((9Z)-octadecenoyl-CoA) as a substrate: shows a higher activity towards an acyl-CoA substrate with a double bond at the delta-9 position (9Z) than towards saturated acyl-CoA or an unsaturated acyl-CoA with a double bond at the delta-7 (7Z) or delta-11 (11Z) positions. The sequence is that of Sterol O-acyltransferase 1 (SOAT1) from Chlorocebus aethiops (Green monkey).